The sequence spans 48 residues: ATP synthase protein 8 (48 aa).

A helical membrane pass occupies residues 12–32; sequence LLTGGILAISLLLYFVATYLL.

This sequence belongs to the ATPase protein 8 family. In terms of assembly, F-type ATPases have 2 components, CF(1) - the catalytic core - and CF(0) - the membrane proton channel.

It is found in the mitochondrion membrane. Its function is as follows. Mitochondrial membrane ATP synthase (F(1)F(0) ATP synthase or Complex V) produces ATP from ADP in the presence of a proton gradient across the membrane which is generated by electron transport complexes of the respiratory chain. F-type ATPases consist of two structural domains, F(1) - containing the extramembraneous catalytic core and F(0) - containing the membrane proton channel, linked together by a central stalk and a peripheral stalk. During catalysis, ATP synthesis in the catalytic domain of F(1) is coupled via a rotary mechanism of the central stalk subunits to proton translocation. Part of the complex F(0) domain. Minor subunit located with subunit a in the membrane. In Candida parapsilosis (Yeast), this protein is ATP synthase protein 8 (ATP8).